A 346-amino-acid polypeptide reads, in one-letter code: Sulfate/thiosulfate import ATP-binding protein CysA (346 aa).

The 235-residue stretch at Val-3–Ile-237 folds into the ABC transporter domain. Residue Gly-35 to Thr-42 coordinates ATP.

It belongs to the ABC transporter superfamily. Sulfate/tungstate importer (TC 3.A.1.6) family. In terms of assembly, the complex is composed of two ATP-binding proteins (CysA), two transmembrane proteins (CysT and CysW) and a solute-binding protein (CysP).

The protein resides in the cell inner membrane. It catalyses the reaction sulfate(out) + ATP + H2O = sulfate(in) + ADP + phosphate + H(+). The enzyme catalyses thiosulfate(out) + ATP + H2O = thiosulfate(in) + ADP + phosphate + H(+). Part of the ABC transporter complex CysAWTP involved in sulfate/thiosulfate import. Responsible for energy coupling to the transport system. The chain is Sulfate/thiosulfate import ATP-binding protein CysA from Mesorhizobium japonicum (strain LMG 29417 / CECT 9101 / MAFF 303099) (Mesorhizobium loti (strain MAFF 303099)).